Reading from the N-terminus, the 352-residue chain is Holliday junction branch migration complex subunit RuvB (352 aa).

Positions 4–191 are large ATPase domain (RuvB-L); sequence TDKLAAPARV…FGIVARLEFY (188 aa). Residues L30, R31, G72, K75, T76, T77, 138-140, R181, Y191, and R228 contribute to the ATP site; that span reads EDY. T76 is a binding site for Mg(2+). The segment at 192 to 262 is small ATPAse domain (RuvB-S); that stretch reads TADELARIVT…MADAALAMLD (71 aa). The segment at 265–352 is head domain (RuvB-H); that stretch reads SVGFDLMDRK…SGASELFGDA (88 aa). Residues R301, R320, and R325 each coordinate DNA.

Belongs to the RuvB family. Homohexamer. Forms an RuvA(8)-RuvB(12)-Holliday junction (HJ) complex. HJ DNA is sandwiched between 2 RuvA tetramers; dsDNA enters through RuvA and exits via RuvB. An RuvB hexamer assembles on each DNA strand where it exits the tetramer. Each RuvB hexamer is contacted by two RuvA subunits (via domain III) on 2 adjacent RuvB subunits; this complex drives branch migration. In the full resolvosome a probable DNA-RuvA(4)-RuvB(12)-RuvC(2) complex forms which resolves the HJ.

It is found in the cytoplasm. The catalysed reaction is ATP + H2O = ADP + phosphate + H(+). In terms of biological role, the RuvA-RuvB-RuvC complex processes Holliday junction (HJ) DNA during genetic recombination and DNA repair, while the RuvA-RuvB complex plays an important role in the rescue of blocked DNA replication forks via replication fork reversal (RFR). RuvA specifically binds to HJ cruciform DNA, conferring on it an open structure. The RuvB hexamer acts as an ATP-dependent pump, pulling dsDNA into and through the RuvAB complex. RuvB forms 2 homohexamers on either side of HJ DNA bound by 1 or 2 RuvA tetramers; 4 subunits per hexamer contact DNA at a time. Coordinated motions by a converter formed by DNA-disengaged RuvB subunits stimulates ATP hydrolysis and nucleotide exchange. Immobilization of the converter enables RuvB to convert the ATP-contained energy into a lever motion, pulling 2 nucleotides of DNA out of the RuvA tetramer per ATP hydrolyzed, thus driving DNA branch migration. The RuvB motors rotate together with the DNA substrate, which together with the progressing nucleotide cycle form the mechanistic basis for DNA recombination by continuous HJ branch migration. Branch migration allows RuvC to scan DNA until it finds its consensus sequence, where it cleaves and resolves cruciform DNA. The protein is Holliday junction branch migration complex subunit RuvB of Cupriavidus necator (strain ATCC 17699 / DSM 428 / KCTC 22496 / NCIMB 10442 / H16 / Stanier 337) (Ralstonia eutropha).